The primary structure comprises 557 residues: Hdr-like menaquinol oxidoreductase iron-sulfur subunit (557 aa).

2 4Fe-4S ferredoxin-type domains span residues 86 to 115 and 155 to 184; these read RAFK…GDPK and KEWY…AEVV. [4Fe-4S] cluster is bound by residues C95, C98, C101, C105, C164, C167, C170, and C174.

It depends on [4Fe-4S] cluster as a cofactor.

The protein localises to the membrane. Has menaquinol-oxidizing activity. The HmeC and HmeD subunits may together mediate electron transfer from menaquinol to an unidentified electron acceptor on the cytoplasmic side of the membrane. This Archaeoglobus profundus (strain DSM 5631 / JCM 9629 / NBRC 100127 / Av18) protein is Hdr-like menaquinol oxidoreductase iron-sulfur subunit (hmeD).